A 744-amino-acid polypeptide reads, in one-letter code: NADH-ubiquinone oxidoreductase 78 kDa subunit, mitochondrial (744 aa).

The span at 1-10 shows a compositional bias: polar residues; it reads MLRSTLSRSA. The interval 1 to 26 is disordered; sequence MLRSTLSRSAWRTGRHQAARNASRAF. The transit peptide at 1–33 directs the protein to the mitochondrion; it reads MLRSTLSRSAWRTGRHQAARNASRAFSATAQRP. One can recognise a 2Fe-2S ferredoxin-type domain in the interval 34–112; sequence AEVELTIDGK…GMVVKTNSPL (79 aa). Residues Cys68, Cys79, Cys82, and Cys96 each coordinate [2Fe-2S] cluster. The region spanning 112–151 is the 4Fe-4S His(Cys)3-ligated-type domain; it reads LTHKAREGVMEFLLANHPLDCPICDQGGECDLQDQSMRYG. Positions 128, 132, 135, 141, 182, 185, 188, and 232 each coordinate [4Fe-4S] cluster. The 4Fe-4S Mo/W bis-MGD-type domain maps to 251–307; that stretch reads LKKTESIDVLDGLGSNIRVDTRGLEVMRILPRLNDEVNEEWINDKTRFACDGLKTQR.

This sequence belongs to the complex I 75 kDa subunit family. As to quaternary structure, complex I is composed of about 40 different subunits. [2Fe-2S] cluster is required as a cofactor. [4Fe-4S] cluster serves as cofactor.

Its subcellular location is the mitochondrion inner membrane. It catalyses the reaction a ubiquinone + NADH + 5 H(+)(in) = a ubiquinol + NAD(+) + 4 H(+)(out). Core subunit of the mitochondrial membrane respiratory chain NADH dehydrogenase (Complex I) that is believed to belong to the minimal assembly required for catalysis. Complex I functions in the transfer of electrons from NADH to the respiratory chain. The immediate electron acceptor for the enzyme is believed to be ubiquinone. This is the largest subunit of complex I and it is a component of the iron-sulfur (IP) fragment of the enzyme. It may form part of the active site crevice where NADH is oxidized. The protein is NADH-ubiquinone oxidoreductase 78 kDa subunit, mitochondrial (nuo78) of Neurospora crassa (strain ATCC 24698 / 74-OR23-1A / CBS 708.71 / DSM 1257 / FGSC 987).